The sequence spans 267 residues: NLP effector protein 6 (267 aa).

An N-terminal signal peptide occupies residues 1-35 (MRTTSPYSHCSHVEMNAGAFVTMLLVALSVCVAAA). N-linked (GlcNAc...) asparagine glycosylation is present at Asn-114. The Conserved undecapeptide motif motif lies at 117–127 (AIMYAWYFPKR). The Conserved heptapeptide motif signature appears at 134–140 (IQRHDWK). The N-linked (GlcNAc...) asparagine glycan is linked to Asn-192.

Belongs to the Necrosis inducing protein (NPP1) family.

Its subcellular location is the secreted. Functionally, probable secreted effector that may act as a pathogen-associated molecular pattern (PAMP) recognized by the plant immune system. The polypeptide is NLP effector protein 6 (Plasmopara viticola (Downy mildew of grapevine)).